A 67-amino-acid chain; its full sequence is Small ribosomal subunit protein bS21 (67 aa).

The protein belongs to the bacterial ribosomal protein bS21 family.

This is Small ribosomal subunit protein bS21 from Rhodospirillum centenum (strain ATCC 51521 / SW).